A 273-amino-acid chain; its full sequence is MSFVFRGSRGDLESGFSGGFLPERRAMRVHGARPVNSNSLAFLVTVLLLFMILNSHQMPPNFLLWLVLGVFLMATTLRMYATCQQLQAHAQAQAAAASGLFSHTELRLHVPPSIALATRGRLQGLRLQLALLDREFDDLDYETLRALDSDNVSTTSMSEEEINALPVHKYKVLDPENGCSLAKQASTSSSAEKMLDSANESKKGTEDELTCSVCLEQVTVGEIVRTLPCLHQFHAGCIDPWLRQQGTCPVCKFRAHSGWQEQDEIDDDASDMV.

Over 1-33 (MSFVFRGSRGDLESGFSGGFLPERRAMRVHGAR) the chain is Cytoplasmic. A helical membrane pass occupies residues 34–54 (PVNSNSLAFLVTVLLLFMILN). Residues 55–56 (SH) lie on the Lumenal side of the membrane. Residues 57–77 (QMPPNFLLWLVLGVFLMATTL) traverse the membrane as a helical segment. Residues 78 to 273 (RMYATCQQLQ…EIDDDASDMV (196 aa)) lie on the Cytoplasmic side of the membrane. The segment at 211–252 (CSVCLEQVTVGEIVRTLPCLHQFHAGCIDPWLRQQGTCPVCK) adopts an RING-type; atypical zinc-finger fold.

Interacts with ATP1/SDIRIP1. As to expression, ubiquitous.

The protein resides in the endoplasmic reticulum membrane. It catalyses the reaction S-ubiquitinyl-[E2 ubiquitin-conjugating enzyme]-L-cysteine + [acceptor protein]-L-lysine = [E2 ubiquitin-conjugating enzyme]-L-cysteine + N(6)-ubiquitinyl-[acceptor protein]-L-lysine.. E3 ubiquitin-protein ligase that acts as a positive regulator of abscisic acid-related stress signal transduction. Interacts with and ubiquitinates ATP1/SDIRIP1 to modulate ATP1/SDIRIP1 stability through the 26S proteasome pathway. Regulates abscisic acid (ABA) and salt stress responses by negatively affecting ATP1/SDIRIP1 stability. The SDIR1-ATP1/SDIRIP1 complex plays an important role in ABA signaling through the ubiquitination pathway. The protein is E3 ubiquitin-protein ligase SDIR1 of Arabidopsis thaliana (Mouse-ear cress).